The primary structure comprises 379 residues: MNQAVIVAAKRTAFGKYGGTLKHLEPEQLLKPLFQHFKEKYLEVISKIDDVVLGNVVGNGGNIARKALLEAGLKDSIPGVTIDRQCGSGLESVQYACRMIQAGAGKVYIAGGVESTSRAPWKIKRPHSVYETALPEFYERASFAPEMSDPSMIQGAENVAKMYDVSRELQDEFAYRSHQLTAENVKNGNISQEILPITVKGEIFNTDESLKSHIPKDNFGRFKPVIKGGTVTAANSCMKNDGAVLLLIMEKDMAYELGFEHGLLFKDGVTVGVDSNFPGIGPVPAISNLLKRNQLTIENIEVIEINEAFSAQVVACQQALNISNTQLNIWGGALASGHPYGASGAQLVTRLFYMFDKETMIASMGIGGGLGNAALFTRF.

Catalysis depends on Cys86, which acts as the Acyl-thioester intermediate. The Proton acceptor role is filled by His338.

This sequence belongs to the thiolase-like superfamily. Thiolase family.

The protein is Putative acetyl-CoA C-acetyltransferase VraB (vraB) of Staphylococcus aureus (strain MSSA476).